The primary structure comprises 310 residues: MTSLSVHTDSPSTQGEMAFNLTILSLTELLSLGGLLGNGVALWLLNQNVYRNPFSIYLLDVACADLIFLCCHMVAIIPELLQDQLNFPEFVHISLTMLRFFCYIVGLSLLAAISTEQCLATLFPAWYLCRRPRYLTTCVCALIWVLCLLLDLLLSGACTQFFGAPSYHLCDMLWLVVAVLLAALCCTMCVTSLLLLLRVERGPERHQPRGFPTLVLLAVLLFLFCGLPFGIFWLSKNLSWHIPLYFYHFSFFMASVHSAAKPAIYFFLGSTPGQRFREPLRLVLQRALGDEAELGAGREASQGGLVDMTV.

Residues 1–22 (MTSLSVHTDSPSTQGEMAFNLT) are Extracellular-facing. The N-linked (GlcNAc...) asparagine glycan is linked to Asn-20. Residues 23–43 (ILSLTELLSLGGLLGNGVALW) form a helical membrane-spanning segment. The Cytoplasmic segment spans residues 44-60 (LLNQNVYRNPFSIYLLD). Residues 61 to 81 (VACADLIFLCCHMVAIIPELL) form a helical membrane-spanning segment. The Extracellular segment spans residues 82 to 92 (QDQLNFPEFVH). Residues 93–113 (ISLTMLRFFCYIVGLSLLAAI) form a helical membrane-spanning segment. Residues 114-133 (STEQCLATLFPAWYLCRRPR) lie on the Cytoplasmic side of the membrane. The helical transmembrane segment at 134–154 (YLTTCVCALIWVLCLLLDLLL) threads the bilayer. Over 155–174 (SGACTQFFGAPSYHLCDMLW) the chain is Extracellular. The chain crosses the membrane as a helical span at residues 175–195 (LVVAVLLAALCCTMCVTSLLL). Residues 196–213 (LLRVERGPERHQPRGFPT) are Cytoplasmic-facing. Residues 214–234 (LVLLAVLLFLFCGLPFGIFWL) form a helical membrane-spanning segment. Topologically, residues 235-248 (SKNLSWHIPLYFYH) are extracellular. N-linked (GlcNAc...) asparagine glycosylation occurs at Asn-237. A helical membrane pass occupies residues 249-269 (FSFFMASVHSAAKPAIYFFLG). At 270-310 (STPGQRFREPLRLVLQRALGDEAELGAGREASQGGLVDMTV) the chain is on the cytoplasmic side.

It belongs to the G-protein coupled receptor 1 family. Mas subfamily.

It is found in the cell membrane. Its function is as follows. Orphan receptor. May regulate nociceptor function and/or development, including the sensation or modulation of pain. The chain is Mas-related G-protein coupled receptor member E (Mrgpre) from Mus musculus (Mouse).